A 130-amino-acid polypeptide reads, in one-letter code: Aspartate 1-decarboxylase (130 aa).

The active-site Schiff-base intermediate with substrate; via pyruvic acid is S25. At S25 the chain carries Pyruvic acid (Ser). Residue T57 participates in substrate binding. Catalysis depends on Y58, which acts as the Proton donor. Substrate is bound at residue 73-75 (GAA).

This sequence belongs to the PanD family. As to quaternary structure, heterooctamer of four alpha and four beta subunits. Pyruvate is required as a cofactor. Post-translationally, is synthesized initially as an inactive proenzyme, which is activated by self-cleavage at a specific serine bond to produce a beta-subunit with a hydroxyl group at its C-terminus and an alpha-subunit with a pyruvoyl group at its N-terminus.

The protein localises to the cytoplasm. The catalysed reaction is L-aspartate + H(+) = beta-alanine + CO2. It functions in the pathway cofactor biosynthesis; (R)-pantothenate biosynthesis; beta-alanine from L-aspartate: step 1/1. Functionally, catalyzes the pyruvoyl-dependent decarboxylation of aspartate to produce beta-alanine. The chain is Aspartate 1-decarboxylase from Myxococcus xanthus (strain DK1622).